We begin with the raw amino-acid sequence, 475 residues long: Melanopsin (475 aa).

Over methionine 1–serine 21 the chain is Extracellular. The helical transmembrane segment at cysteine 22–tyrosine 42 threads the bilayer. Residues serine 43 to tyrosine 53 lie on the Cytoplasmic side of the membrane. A helical transmembrane segment spans residues phenylalanine 54 to phenylalanine 74. The Extracellular portion of the chain corresponds to leucine 75–asparagine 90. A disulfide bridge links cysteine 89 with cysteine 167. Residues phenylalanine 91–serine 111 form a helical membrane-spanning segment. Residues valine 112–cysteine 134 are Cytoplasmic-facing. Residues isoleucine 135–tryptophan 155 form a helical membrane-spanning segment. The Extracellular segment spans residues serine 156–cysteine 187. Residue asparagine 178 is glycosylated (N-linked (GlcNAc...) asparagine). A helical transmembrane segment spans residues phenylalanine 188 to isoleucine 208. Over arginine 209 to lysine 240 the chain is Cytoplasmic. A helical transmembrane segment spans residues isoleucine 241–leucine 261. The Extracellular segment spans residues isoleucine 262–lysine 276. The chain crosses the membrane as a helical span at residues serine 277 to isoleucine 297. N6-(retinylidene)lysine is present on lysine 284. Residues histidine 298 to histidine 475 are Cytoplasmic-facing. Disordered stretches follow at residues valine 370–glutamate 390 and proline 445–histidine 475. Over residues lysine 375 to serine 384 the composition is skewed to basic residues. Polar residues predominate over residues proline 445–glutamate 454. Residues glutamate 455–valine 464 are compositionally biased toward acidic residues. Over residues glutamine 465–histidine 475 the composition is skewed to basic and acidic residues.

This sequence belongs to the G-protein coupled receptor 1 family. Opsin subfamily. As to expression, highest level in the lateral eye. Low level in the brain.

It is found in the cell membrane. Photoreceptor implicated in non-image-forming responses to light. May be able to isomerize covalently bound all-trans retinal back to 11-cis retinal. This is Melanopsin (OPN4) from Podarcis siculus (Italian wall lizard).